The chain runs to 516 residues: Putative F-box and FNIP repeat-containing protein L414 (516 aa).

One can recognise an F-box domain in the interval 4–49 (INDLNMDVILHLLTFLTDKNKLNFMMTCTHLYQFISCVKYNNFQLF). FNIP repeat units follow at residues 123 to 165 (FNHT…FGEN), 166 to 208 (FNKM…LMYS), 341 to 383 (YNPK…NFNG), 385 to 428 (YDNI…FGKL), and 429 to 470 (YNKP…FGYM).

In Acanthamoeba polyphaga (Amoeba), this protein is Putative F-box and FNIP repeat-containing protein L414.